Consider the following 1386-residue polypeptide: DNA-directed RNA polymerase subunit beta'' (1386 aa).

Residues Cys220, Cys289, Cys296, and Cys299 each contribute to the Zn(2+) site.

It belongs to the RNA polymerase beta' chain family. RpoC2 subfamily. As to quaternary structure, in plastids the minimal PEP RNA polymerase catalytic core is composed of four subunits: alpha, beta, beta', and beta''. When a (nuclear-encoded) sigma factor is associated with the core the holoenzyme is formed, which can initiate transcription. Zn(2+) serves as cofactor.

It localises to the plastid. It is found in the chloroplast. It carries out the reaction RNA(n) + a ribonucleoside 5'-triphosphate = RNA(n+1) + diphosphate. In terms of biological role, DNA-dependent RNA polymerase catalyzes the transcription of DNA into RNA using the four ribonucleoside triphosphates as substrates. The chain is DNA-directed RNA polymerase subunit beta'' from Marchantia polymorpha (Common liverwort).